We begin with the raw amino-acid sequence, 166 residues long: Myosin regulatory light chain 2, ventricular/cardiac muscle isoform (166 aa).

A2 bears the N,N,N-trimethylalanine mark. Phosphoserine; by MLCK is present on residues S14 and S15. S19 bears the Phosphoserine mark. EF-hand domains follow at residues 24–59, 94–129, and 130–165; these read TQIQEFKEAFTIMDQNRDGFIDKNDLRDTFAALGRV, DPEETILNAFKVFDPEGKGSLKADYVREMLTTQAER, and FSKEEIDQMFAAFPPDVTGNLDYKNLVHIITHGEEK. Positions 37, 39, 41, and 48 each coordinate Ca(2+). T52 bears the Phosphothreonine mark.

As to quaternary structure, myosin is a hexamer of 2 heavy chains and 4 light chains. Interacts with MYOC. N-terminus is methylated by METTL11A/NTM1. Post-translationally, phosphorylated by MYLK3 and MYLK2; promotes cardiac muscle contraction and function. Dephosphorylated by PPP1CB complexed to PPP1R12B. The phosphorylated form in adult is expressed as gradients across the heart from endocardium (low phosphorylation) to epicardium (high phosphorylation); regulates cardiac torsion and workload distribution. In terms of tissue distribution, abundantly expressed in both cardiac and slow skeletal muscle. In the adult heart, the phosphorylated form is highly expressed in epicardium and weakly in endocardium.

Its subcellular location is the cytoplasm. The protein localises to the myofibril. It is found in the sarcomere. The protein resides in the a band. In terms of biological role, contractile protein that plays a role in heart development and function. Following phosphorylation, plays a role in cross-bridge cycling kinetics and cardiac muscle contraction by increasing myosin lever arm stiffness and promoting myosin head diffusion; as a consequence of the increase in maximum contraction force and calcium sensitivity of contraction force. These events altogether slow down myosin kinetics and prolong duty cycle resulting in accumulated myosins being cooperatively recruited to actin binding sites to sustain thin filament activation as a means to fine-tune myofilament calcium sensitivity to force. During cardiogenesis plays an early role in cardiac contractility by promoting cardiac myofibril assembly. The sequence is that of Myosin regulatory light chain 2, ventricular/cardiac muscle isoform from Mus musculus (Mouse).